We begin with the raw amino-acid sequence, 75 residues long: Mating pheromone Er-10 (75 aa).

An N-terminal signal peptide occupies residues 1–19 (MNKLAILAIIAMVLFSANA). The propeptide occupies 20 to 37 (FRFQSRIRSNVEAKTETR). 3 cysteine pairs are disulfide-bonded: C40–C56, C47–C74, and C52–C64.

Homodimer.

The protein localises to the secreted. In terms of biological role, mating ciliate pheromones (or gamones) are diffusible extracellular communication signals that distinguish different intraspecific classes of cells commonly referred to as 'mating types'. They prepare the latter for conjugation by changing their cell surface properties. The chain is Mating pheromone Er-10 (MAT10) from Euplotes raikovi.